Reading from the N-terminus, the 229-residue chain is Growth factor receptor-bound protein 2 (229 aa).

2 consecutive SH3 domains span residues 1–58 and 168–227; these read MEAV…MKPH and QQPT…PVNR. The 112-residue stretch at 60–171 folds into the SH2 domain; the sequence is WFFGKIPRAK…RATNLLQQPT (112 aa).

It is found in the nucleus. Its subcellular location is the cytoplasm. It localises to the endosome. The protein resides in the golgi apparatus. Adapter protein that provides a critical link between cell surface growth factor receptors and the Ras signaling pathway. Promotes meiotic reinitiation during oocyte maturation. The polypeptide is Growth factor receptor-bound protein 2 (Xenopus tropicalis (Western clawed frog)).